The following is a 298-amino-acid chain: Protoheme IX farnesyltransferase (298 aa).

8 consecutive transmembrane segments (helical) span residues 23 to 43 (VTQL…PGLP), 49 to 69 (LFGT…NCLI), 95 to 115 (VLSL…HLVN), 117 to 137 (LTMW…TVIL), 144 to 164 (NIVI…ASVA), 171 to 191 (AWVL…ALAL), 234 to 254 (FMHM…GIFV), and 276 to 296 (SILY…VGVL).

Belongs to the UbiA prenyltransferase family. Protoheme IX farnesyltransferase subfamily.

The protein resides in the cell inner membrane. It catalyses the reaction heme b + (2E,6E)-farnesyl diphosphate + H2O = Fe(II)-heme o + diphosphate. Its pathway is porphyrin-containing compound metabolism; heme O biosynthesis; heme O from protoheme: step 1/1. Its function is as follows. Converts heme B (protoheme IX) to heme O by substitution of the vinyl group on carbon 2 of heme B porphyrin ring with a hydroxyethyl farnesyl side group. This Bordetella avium (strain 197N) protein is Protoheme IX farnesyltransferase.